The primary structure comprises 94 residues: Cell division protein FtsB (94 aa).

Over methionine 1–tryptophan 8 the chain is Cytoplasmic. The helical transmembrane segment at leucine 9–valine 26 threads the bilayer. Topologically, residues glycine 27 to lysine 94 are periplasmic. Residues leucine 31–histidine 78 adopt a coiled-coil conformation.

The protein belongs to the FtsB family. In terms of assembly, part of a complex composed of FtsB, FtsL and FtsQ.

It is found in the cell inner membrane. Functionally, essential cell division protein. May link together the upstream cell division proteins, which are predominantly cytoplasmic, with the downstream cell division proteins, which are predominantly periplasmic. This is Cell division protein FtsB from Pseudomonas aeruginosa (strain ATCC 15692 / DSM 22644 / CIP 104116 / JCM 14847 / LMG 12228 / 1C / PRS 101 / PAO1).